Consider the following 991-residue polypeptide: KAT8 regulatory NSL complex subunit 1-like protein (991 aa).

Residue lysine 136 forms a Glycyl lysine isopeptide (Lys-Gly) (interchain with G-Cter in SUMO2) linkage. Positions 443–462 are disordered; sequence VNSQVPQRSEEPLPEHDFEM. Positions 450-461 are enriched in basic and acidic residues; it reads RSEEPLPEHDFE. Phosphoserine is present on serine 463. A compositionally biased stretch (polar residues) spans 749 to 763; the sequence is ANVTSRTQNPSSQNT. The segment at 749-770 is disordered; the sequence is ANVTSRTQNPSSQNTSRRRLRS. The PEHE domain maps to 798-919; sequence EILTPRWRKV…DGQEDKSLRW (122 aa). N6-acetyllysine is present on lysine 863.

Acetylated on lysine residues by KAT8 upon ionizing radiation-induced DNA damage; deacetylated by HDAC3.

This Mus musculus (Mouse) protein is KAT8 regulatory NSL complex subunit 1-like protein (Kansl1l).